The following is a 268-amino-acid chain: Protein DEEPER ROOTING 1 (268 aa).

Positions 11-21 (LNGKQGNKKPN) are enriched in low complexity. A disordered region spans residues 11–39 (LNGKQGNKKPNTVPITTHPAKQEPREEFS). Residues 30 to 39 (AKQEPREEFS) show a composition bias toward basic and acidic residues. The IGT motif signature appears at 44–50 (GLLAIGT). Residues 220 to 246 (SRAASMKKYLEDRQIPTKKESNTEDDT) form a disordered region. Positions 227–246 (KYLEDRQIPTKKESNTEDDT) are enriched in basic and acidic residues.

Belongs to the LAZY family. Expressed in roots.

Involved in the development of the root system architecture by influencing lateral root angles and primary root length. The polypeptide is Protein DEEPER ROOTING 1 (Prunus persica (Peach)).